The sequence spans 154 residues: 3-hydroxyacyl-[acyl-carrier-protein] dehydratase FabZ (154 aa).

Residue histidine 54 is part of the active site.

Belongs to the thioester dehydratase family. FabZ subfamily.

The protein localises to the cytoplasm. It carries out the reaction a (3R)-hydroxyacyl-[ACP] = a (2E)-enoyl-[ACP] + H2O. Involved in unsaturated fatty acids biosynthesis. Catalyzes the dehydration of short chain beta-hydroxyacyl-ACPs and long chain saturated and unsaturated beta-hydroxyacyl-ACPs. This chain is 3-hydroxyacyl-[acyl-carrier-protein] dehydratase FabZ, found in Shewanella putrefaciens (strain CN-32 / ATCC BAA-453).